A 417-amino-acid chain; its full sequence is Gap junction alpha-3 protein (417 aa).

An intramembrane segment occupies 2 to 15; that stretch reads GDWSFLGRLLENAQ. Over 16–19 the chain is Cytoplasmic; it reads EHST. A helical membrane pass occupies residues 20–40; sequence VIGKVWLTVLFIFRILVLGAA. The Extracellular portion of the chain corresponds to 41–71; it reads AEEVWGDEQSDFTCNTQQPGCENVCYDRAFP. Disulfide bonds link Cys54–Cys198, Cys61–Cys192, and Cys65–Cys187. Residues 72–92 traverse the membrane as a helical segment; that stretch reads ISHIRFWALQIIFVSTPTLIY. Residues 93–158 are Cytoplasmic-facing; the sequence is LGHVLHIVRM…GALLRTYVFN (66 aa). A compositionally biased stretch (basic and acidic residues) spans 110 to 128; the sequence is EEELLRRDNPQHGRGREPM. Positions 110–141 are disordered; it reads EEELLRRDNPQHGRGREPMRTGSPRDPPLRDD. Residues 159–179 form a helical membrane-spanning segment; that stretch reads IIFKTLFEVGFIAGQYFLYGF. Topologically, residues 180–207 are extracellular; that stretch reads QLQPLYRCDRWPCPNTVDCFISRPTEKT. Residues 208-228 traverse the membrane as a helical segment; that stretch reads IFVIFMLAVACASLVLNMLEI. Residues 229 to 417 are Cytoplasmic-facing; it reads YHLGWKKLKQ…GRARPGDLAI (189 aa). Disordered regions lie at residues 247-267 and 334-417; these read DASE…SSGP and RQVA…DLAI. Over residues 342 to 353 the composition is skewed to low complexity; that stretch reads PASKPSSAASSP.

It belongs to the connexin family. Alpha-type (group II) subfamily. In terms of assembly, a hemichannel or connexon is composed of a hexamer of connexins. A functional gap junction is formed by the apposition of two hemichannels. Forms heteromeric channels with GJA8.

It localises to the cell membrane. The protein resides in the cell junction. The protein localises to the gap junction. In terms of biological role, structural component of lens fiber gap junctions. Gap junctions are dodecameric channels that connect the cytoplasm of adjoining cells. They are formed by the docking of two hexameric hemichannels, one from each cell membrane. Small molecules and ions diffuse from one cell to a neighboring cell via the central pore. The protein is Gap junction alpha-3 protein (Gja3) of Mus musculus (Mouse).